We begin with the raw amino-acid sequence, 37 residues long: Large ribosomal subunit protein bL36 (37 aa).

This sequence belongs to the bacterial ribosomal protein bL36 family.

The protein is Large ribosomal subunit protein bL36 of Syntrophomonas wolfei subsp. wolfei (strain DSM 2245B / Goettingen).